The sequence spans 143 residues: Mediator of RNA polymerase II transcription subunit 21 (143 aa).

Positions 53–130 (KEFEKNIDEL…KVRTLTQDFT (78 aa)) form a coiled coil.

It belongs to the Mediator complex subunit 21 family. As to quaternary structure, component of the Mediator complex.

It is found in the nucleus. In terms of biological role, component of the Mediator complex, a coactivator involved in the regulated transcription of nearly all RNA polymerase II-dependent genes. Mediator functions as a bridge to convey information from gene-specific regulatory proteins to the basal RNA polymerase II transcription machinery. Mediator is recruited to promoters by direct interactions with regulatory proteins and serves as a scaffold for the assembly of a functional preinitiation complex with RNA polymerase II and the general transcription factors. This Kluyveromyces lactis (strain ATCC 8585 / CBS 2359 / DSM 70799 / NBRC 1267 / NRRL Y-1140 / WM37) (Yeast) protein is Mediator of RNA polymerase II transcription subunit 21 (SRB7).